We begin with the raw amino-acid sequence, 1253 residues long: Cytoplasmic FMR1-interacting protein 1 (1253 aa).

Residue Ser-583 is modified to Phosphoserine. Thr-1234 carries the phosphothreonine modification.

This sequence belongs to the CYFIP family. In terms of assembly, component of the WAVE1 complex composed of ABI2, CYFIP1 or CYFIP2, BRK1, NCKAP1 and WASF1/WAVE1. Within the complex, a heterodimer containing NCKAP1 and CYFIP1 interacts with a heterotrimer formed by WAVE1, ABI2 and BRK1. Component of the CYFIP1-EIF4E-FMR1 complex which is composed of CYFIP, EIF4E and FMR1. Interacts with FMR1 but does not bind to related proteins FXR1 or FXR2. Interaction with EIF4E stimulates FMR1 binding. Component of the WAVE2 complex composed of ABI1, CYFIP1/SRA1, NCKAP1/NAP1 (NCKAP1l/HEM1 in hematopoietic cells) and WASF2/WAVE2. Interacts with the active GTP-bound form of RAC1. Interacts through its C-terminus with the C-terminus of DPYSL2/CRMP2 which is necessary for DPYSL2-induced axon outgrowth. Interacts with NYAP1, NYAP2 and MYO16. Interacts with TMEM108 (via N-terminus); the interaction associates TMEM108 with the WAVE1 complex.

It is found in the cytoplasm. It localises to the perinuclear region. Its subcellular location is the cell projection. The protein localises to the lamellipodium. The protein resides in the ruffle. It is found in the synapse. It localises to the synaptosome. Component of the CYFIP1-EIF4E-FMR1 complex which binds to the mRNA cap and mediates translational repression. In the CYFIP1-EIF4E-FMR1 complex this subunit is an adapter between EIF4E and FMR1. Promotes the translation repression activity of FMR1 in brain probably by mediating its association with EIF4E and mRNA. Regulates formation of membrane ruffles and lamellipodia. Plays a role in axon outgrowth. Binds to F-actin but not to RNA. Part of the WAVE complex that regulates actin filament reorganization via its interaction with the Arp2/3 complex. Actin remodeling activity is regulated by RAC1. Regulator of epithelial morphogenesis. As component of the WAVE1 complex, required for BDNF-NTRK2 endocytic trafficking and signaling from early endosomes. May act as an invasion suppressor in cancers. The sequence is that of Cytoplasmic FMR1-interacting protein 1 from Homo sapiens (Human).